The chain runs to 538 residues: Cytochrome P450 734A4 (538 aa).

A helical transmembrane segment spans residues 5–27; sequence VAVAAAVLLLLHVAARVADAVWW. Cys-480 provides a ligand contact to heme.

The protein belongs to the cytochrome P450 family. Requires heme as cofactor. In terms of tissue distribution, expressed in roots, shoot apex, leaf sheaths, leaf blades, internodes and panicles.

The protein localises to the membrane. Cytochrome P450 involved in brassinosteroids (BRs) inactivation and regulation of BRs homeostasis. Is a multifunctional and multisubstrate enzyme that controls the endogenous bioactive BR content both by direct inactivation of castasterone (CS) and by decreasing the levels of BR precursors. Catalyzes the oxidation of carbon 22 hydroxylated BR intermediates to produce C26 oxidized metabolites. This Oryza sativa subsp. japonica (Rice) protein is Cytochrome P450 734A4 (CYP734A4).